The chain runs to 196 residues: Dephospho-CoA kinase (196 aa).

The 191-residue stretch at 6 to 196 folds into the DPCK domain; the sequence is AIALTGGIGT…QVERFLKTLL (191 aa). Residue 14–19 coordinates ATP; the sequence is GTGKST.

This sequence belongs to the CoaE family.

Its subcellular location is the cytoplasm. It carries out the reaction 3'-dephospho-CoA + ATP = ADP + CoA + H(+). Its pathway is cofactor biosynthesis; coenzyme A biosynthesis; CoA from (R)-pantothenate: step 5/5. Its function is as follows. Catalyzes the phosphorylation of the 3'-hydroxyl group of dephosphocoenzyme A to form coenzyme A. This is Dephospho-CoA kinase from Helicobacter pylori (strain J99 / ATCC 700824) (Campylobacter pylori J99).